The following is a 315-amino-acid chain: Ribose-phosphate pyrophosphokinase (315 aa).

ATP-binding positions include 37–39 (DGE) and 96–97 (RQ). Residues H131 and D170 each coordinate Mg(2+). Residue K194 is part of the active site. D-ribose 5-phosphate is bound by residues R196, D220, and 224 to 228 (DTGGT).

This sequence belongs to the ribose-phosphate pyrophosphokinase family. Class I subfamily. As to quaternary structure, homohexamer. Mg(2+) serves as cofactor.

It is found in the cytoplasm. It carries out the reaction D-ribose 5-phosphate + ATP = 5-phospho-alpha-D-ribose 1-diphosphate + AMP + H(+). It functions in the pathway metabolic intermediate biosynthesis; 5-phospho-alpha-D-ribose 1-diphosphate biosynthesis; 5-phospho-alpha-D-ribose 1-diphosphate from D-ribose 5-phosphate (route I): step 1/1. Involved in the biosynthesis of the central metabolite phospho-alpha-D-ribosyl-1-pyrophosphate (PRPP) via the transfer of pyrophosphoryl group from ATP to 1-hydroxyl of ribose-5-phosphate (Rib-5-P). The polypeptide is Ribose-phosphate pyrophosphokinase (Photorhabdus laumondii subsp. laumondii (strain DSM 15139 / CIP 105565 / TT01) (Photorhabdus luminescens subsp. laumondii)).